The chain runs to 818 residues: Protein Cep78 homolog (818 aa).

3 disordered regions span residues 513–589, 691–748, and 768–798; these read LDVE…HEFA, RQAN…TEAT, and KQSE…DQNV. Residues 514-539 are compositionally biased toward acidic residues; sequence DVEEEEEEEEEEQQAEESQSESEPQN. Residues 561–589 show a composition bias toward basic and acidic residues; the sequence is VRSEIKYVENNPKEAAKKNRESKSDHEFA. Positions 782 to 792 are enriched in gly residues; sequence GDAGGGGGSGD.

Belongs to the CEP78 family.

It is found in the cytoplasm. The protein localises to the cytoskeleton. Its subcellular location is the microtubule organizing center. It localises to the centrosome. The protein resides in the centriole. It is found in the cilium basal body. In terms of biological role, may play a role in cilium biogenesis. The chain is Protein Cep78 homolog from Drosophila melanogaster (Fruit fly).